The following is a 152-amino-acid chain: Ribosome maturation factor RimP (152 aa).

Belongs to the RimP family.

The protein resides in the cytoplasm. In terms of biological role, required for maturation of 30S ribosomal subunits. The chain is Ribosome maturation factor RimP from Erwinia tasmaniensis (strain DSM 17950 / CFBP 7177 / CIP 109463 / NCPPB 4357 / Et1/99).